The following is a 715-amino-acid chain: Epidermal growth factor receptor kinase substrate 8-like protein 2 (715 aa).

Residues 46-202 form the PID domain; that stretch reads MHETSQYHVQ…RQRQSILPPP (157 aa). Residues 183–243 form a disordered region; it reads QTLKGHQEKI…GFRRRESQEE (61 aa). The segment covering 199-208 has biased composition (pro residues); it reads LPPPQGPAPI. Basic and acidic residues-rich tracts occupy residues 213-222 and 234-243; these read RGGDSPEAKN and GFRRRESQEE. Position 240 is a phosphoserine (Ser240). Thr303 is modified (phosphothreonine). The segment at 448 to 487 is disordered; the sequence is VSPVSRQSIRNSQKHSPTSEPTPPGDALPPVSSPHTHRGY. Position 449 is a phosphoserine (Ser449). Over residues 451–466 the composition is skewed to polar residues; the sequence is VSRQSIRNSQKHSPTS. Thr469 is modified (phosphothreonine). One can recognise an SH3 domain in the interval 492 to 551; sequence AMAKYVKILYDFTARNANELSVLKDEVLEVLEDGRQWWKLRSRSGQAGYVPCNILGEARP. Residue Ser570 is modified to Phosphoserine.

Belongs to the EPS8 family. As to quaternary structure, interacts with ABI1. Part of a complex that contains SOS1, ABI1 and EPS8L2. Associates with F-actin. In terms of tissue distribution, detected in fibroblasts and placenta.

It localises to the cytoplasm. Its subcellular location is the cell projection. The protein resides in the stereocilium. Functionally, stimulates guanine exchange activity of SOS1. May play a role in membrane ruffling and remodeling of the actin cytoskeleton. In the cochlea, is required for stereocilia maintenance in adult hair cells. This is Epidermal growth factor receptor kinase substrate 8-like protein 2 (EPS8L2) from Homo sapiens (Human).